A 749-amino-acid polypeptide reads, in one-letter code: Fibronectin type III and SPRY domain-containing protein 2 (749 aa).

A coiled-coil region spans residues 205-317 (LNEALESAKD…TIEEMCHEEK (113 aa)). Fibronectin type-III domains follow at residues 375–470 (PVIN…TAPS) and 471–564 (PPII…TIGS). The region spanning 546–744 (NMGGPSVRSE…KVHNGISMPK (199 aa)) is the B30.2/SPRY domain.

In terms of assembly, interacts with CMYA5. In cardiac muscles, identified in a complex composed of FSD2, CMYA5 and RYR2.

It is found in the nucleus. The protein localises to the sarcoplasmic reticulum. It localises to the cytoplasm. Its subcellular location is the perinuclear region. In Homo sapiens (Human), this protein is Fibronectin type III and SPRY domain-containing protein 2 (FSD2).